Here is a 460-residue protein sequence, read N- to C-terminus: Bifunctional protein GlmU (460 aa).

The interval 1-235 (MALSAAIVLA…PLTVEGVNDR (235 aa)) is pyrophosphorylase. Residues 9–12 (LAAG), Lys-23, Gln-76, and 81–82 (GT) contribute to the UDP-N-acetyl-alpha-D-glucosamine site. Residue Asp-109 participates in Mg(2+) binding. UDP-N-acetyl-alpha-D-glucosamine is bound by residues Gly-146, Glu-161, Asn-176, and Asn-233. Asn-233 contacts Mg(2+). The interval 236–256 (VQLAALSKTYNRRVCERWMRD) is linker. Residues 257–460 (GVTILDPETT…VEGWKPAWER (204 aa)) are N-acetyltransferase. 2 residues coordinate UDP-N-acetyl-alpha-D-glucosamine: Arg-338 and Lys-356. His-368 acts as the Proton acceptor in catalysis. UDP-N-acetyl-alpha-D-glucosamine-binding residues include Tyr-371 and Asn-382. Residues 391-392 (NY) and Ala-428 contribute to the acetyl-CoA site.

It in the N-terminal section; belongs to the N-acetylglucosamine-1-phosphate uridyltransferase family. The protein in the C-terminal section; belongs to the transferase hexapeptide repeat family. In terms of assembly, homotrimer. Mg(2+) is required as a cofactor.

It is found in the cytoplasm. It catalyses the reaction alpha-D-glucosamine 1-phosphate + acetyl-CoA = N-acetyl-alpha-D-glucosamine 1-phosphate + CoA + H(+). The catalysed reaction is N-acetyl-alpha-D-glucosamine 1-phosphate + UTP + H(+) = UDP-N-acetyl-alpha-D-glucosamine + diphosphate. Its pathway is nucleotide-sugar biosynthesis; UDP-N-acetyl-alpha-D-glucosamine biosynthesis; N-acetyl-alpha-D-glucosamine 1-phosphate from alpha-D-glucosamine 6-phosphate (route II): step 2/2. It functions in the pathway nucleotide-sugar biosynthesis; UDP-N-acetyl-alpha-D-glucosamine biosynthesis; UDP-N-acetyl-alpha-D-glucosamine from N-acetyl-alpha-D-glucosamine 1-phosphate: step 1/1. It participates in bacterial outer membrane biogenesis; LPS lipid A biosynthesis. Catalyzes the last two sequential reactions in the de novo biosynthetic pathway for UDP-N-acetylglucosamine (UDP-GlcNAc). The C-terminal domain catalyzes the transfer of acetyl group from acetyl coenzyme A to glucosamine-1-phosphate (GlcN-1-P) to produce N-acetylglucosamine-1-phosphate (GlcNAc-1-P), which is converted into UDP-GlcNAc by the transfer of uridine 5-monophosphate (from uridine 5-triphosphate), a reaction catalyzed by the N-terminal domain. The protein is Bifunctional protein GlmU of Bifidobacterium longum (strain NCC 2705).